Here is a 3371-residue protein sequence, read N- to C-terminus: Abnormal spindle-like microcephaly-associated protein homolog (3371 aa).

A phosphoserine mark is found at S212, S215, S300, S325, and S540. The segment at 536-559 (RPHFSPVESKTSTVKHTKKVVTSS) is disordered. The Calponin-homology (CH) 1 domain occupies 852–988 (KASKEILLAF…LLWKIALAFQ (137 aa)). Residues 989–1014 (VDISLNLDQLKEEIDFLKNTQSMKKT) adopt a coiled-coil conformation. S1035 bears the Phosphoserine mark. Residues 1042–1193 (SESVKLLMDW…YLSFLCARLL (152 aa)) enclose the Calponin-homology (CH) 2 domain. IQ domains lie at 1198 to 1227 (ETRA…RDKA), 1396 to 1427 (EERA…IIIQ), 1469 to 1500 (KRAA…VLQS), 1564 to 1593 (TRSA…SIVK), 1587 to 1616 (ILTS…ATVK), 1610 to 1639 (LKKA…IAQQ), 1644 to 1673 (RRAS…AAVS), 1667 to 1698 (QRKA…VVIQ), 1717 to 1746 (VRRA…AALK), 1740 to 1769 (QSAA…SALK), 1790 to 1819 (TRTA…AAVK), 1813 to 1844 (EHEA…SVIQ), 1863 to 1894 (LRRA…IIIQ), 1886 to 1917 (QQRC…HLIQ), 1936 to 1965 (TKXA…AAAT), 1959 to 1990 (MHQA…VIIQ), 2009 to 2040 (VKKA…TLIK), 2032 to 2063 (MHMA…IIIQ), 2082 to 2113 (ILKA…TLIQ), 2105 to 2134 (MRTA…VTKT), 2155 to 2186 (LRRS…AVIQ), 2227 to 2258 (LQKA…TVLQ), 2250 to 2281 (MRRA…QVIQ), 2300 to 2331 (QRHS…TLIQ), 2323 to 2354 (MHAS…VFVQ), 2396 to 2427 (MHRA…VLIQ), 2446 to 2477 (WRHS…VIIQ), 2539 to 2570 (RHQA…VFVQ), 2580 to 2609 (RTQA…AATR), 2603 to 2634 (MHLA…VVIQ), 2653 to 2682 (IQKS…KKMA), 2729 to 2760 (QRKA…RIQS), 2751 to 2780 (QRRA…AALT), 2824 to 2853 (IRSS…STIK), 2847 to 2878 (LKDS…RIQA), 2869 to 2900 (EVKA…RIIQ), 2944 to 2973 (RHQA…AALT), 2994 to 3025 (LKKS…RLLH), 3096 to 3125 (HSRA…RIAK), and 3119 to 3150 (FNKR…IRQR).

It localises to the cytoplasm. It is found in the cytoskeleton. Its subcellular location is the spindle. The protein localises to the nucleus. Probable role in mitotic spindle regulation and coordination of mitotic processes. May have a preferential role in regulating neurogenesis. The sequence is that of Abnormal spindle-like microcephaly-associated protein homolog (ASPM) from Bos taurus (Bovine).